A 447-amino-acid chain; its full sequence is Innexin-5 (447 aa).

4 consecutive transmembrane segments (helical) span residues 30–47, 108–128, 198–218, and 283–303; these read TSTL…SQYV, QWIP…SIIW, ALYL…FWIL, and VYVF…CSLA. The segment at 389–447 is disordered; the sequence is KKDDDSALPASAPVDLQEDDDDDTPFPPPTKAVAETLTSDDEEEETDVDSPDTTATLPR. Positions 426-438 are enriched in acidic residues; sequence TSDDEEEETDVDS.

It belongs to the pannexin family.

The protein resides in the cell membrane. Its subcellular location is the cell junction. The protein localises to the gap junction. Its function is as follows. Structural component of the gap junctions. This chain is Innexin-5 (inx-5), found in Caenorhabditis elegans.